The primary structure comprises 758 residues: Deoxynucleotidyltransferase terminal-interacting protein 2 (758 aa).

The segment covering 1–21 (MVVTRSGLSRTRLQESSQQKR) has biased composition (polar residues). Positions 1–176 (MVVTRSGLSR…SQSGTVSDAE (176 aa)) are disordered. Serine 17, serine 133, serine 137, and serine 140 each carry phosphoserine. Low complexity predominate over residues 128 to 143 (DEVVVSEAESHVSGVS). Over residues 155 to 172 (NKANSQRDSSQESQSGTV) the composition is skewed to polar residues. 2 positions are modified to phosphoserine: serine 173 and serine 183. Residue lysine 210 forms a Glycyl lysine isopeptide (Lys-Gly) (interchain with G-Cter in SUMO2) linkage. Phosphoserine is present on residues serine 229, serine 240, serine 248, and serine 255. A compositionally biased stretch (polar residues) spans 231 to 255 (ATQLSARPLSQRNMPNVSDSETYNS). 4 disordered regions span residues 231-277 (ATQL…HQNL), 312-353 (KVIN…QLSS), 377-480 (DKRG…AEDL), and 501-552 (DKNF…DLLS). Lysine 317 is covalently cross-linked (Glycyl lysine isopeptide (Lys-Gly) (interchain with G-Cter in SUMO2)). Residues 321–353 (RSLSEAQDTSLQQSVSQNHSSTPNKKPTFQLSS) show a composition bias toward polar residues. A phosphoserine mark is found at serine 324 and serine 330. Residues lysine 345 and lysine 384 each participate in a glycyl lysine isopeptide (Lys-Gly) (interchain with G-Cter in SUMO2) cross-link. Residues 377-387 (DKRGGSGKKSD) show a composition bias toward basic and acidic residues. The segment covering 431–440 (LSMTQDTTDS) has biased composition (polar residues). Residues 447 to 456 (SSDESQQSDS) show a composition bias toward low complexity. Phosphoserine occurs at positions 476 and 512. Residues 512-541 (SEVAIEEEKEEEEKEEENSEEDSSDSDENK) adopt a coiled-coil conformation. The segment covering 515 to 550 (AIEEEKEEEEKEEENSEEDSSDSDENKDESSDEEDL) has biased composition (acidic residues). A tdBR region; mediates interaction with DNTT region spans residues 550–607 (LLSNTKSKLLKLTSSSIDPGLNIKQLGGLYINFNVDKLQPHKETLTQIKEKKKNELLQ). Glycyl lysine isopeptide (Lys-Gly) (interchain with G-Cter in SUMO2) cross-links involve residues lysine 560, lysine 586, and lysine 608. Threonine 612 is modified (phosphothreonine). A disordered region spans residues 621–647 (VPPYSESKHRLQKQRRKERQKTAGNGW). Lysine 628 participates in a covalent cross-link: Glycyl lysine isopeptide (Lys-Gly) (interchain with G-Cter in SUMO2). The span at 630–639 (RLQKQRRKER) shows a compositional bias: basic residues. Residues lysine 651, lysine 660, lysine 688, and lysine 733 each participate in a glycyl lysine isopeptide (Lys-Gly) (interchain with G-Cter in SUMO2) cross-link.

As to quaternary structure, forms a ternary complex with DNTT and core histone; interaction with PCNA releases DNTT and H2A/H2B histones from this ternary complex. Interacts with ESR1, ESR2, PPARG and RXRA. Part of the small subunit (SSU) processome, composed of more than 70 proteins and the RNA chaperone small nucleolar RNA (snoRNA) U3.

It is found in the nucleus. The protein localises to the nucleolus. Its function is as follows. Regulates the transcriptional activity of DNTT and ESR1. May function as a chromatin remodeling protein. Part of the small subunit (SSU) processome, first precursor of the small eukaryotic ribosomal subunit. During the assembly of the SSU processome in the nucleolus, many ribosome biogenesis factors, an RNA chaperone and ribosomal proteins associate with the nascent pre-rRNA and work in concert to generate RNA folding, modifications, rearrangements and cleavage as well as targeted degradation of pre-ribosomal RNA by the RNA exosome. This Mus musculus (Mouse) protein is Deoxynucleotidyltransferase terminal-interacting protein 2 (Dnttip2).